The chain runs to 337 residues: Inositol 2-dehydrogenase (337 aa).

It belongs to the Gfo/Idh/MocA family. As to quaternary structure, homotetramer.

It catalyses the reaction myo-inositol + NAD(+) = scyllo-inosose + NADH + H(+). Its function is as follows. Involved in the oxidation of myo-inositol (MI) to 2-keto-myo-inositol (2KMI or 2-inosose). In Burkholderia vietnamiensis (strain G4 / LMG 22486) (Burkholderia cepacia (strain R1808)), this protein is Inositol 2-dehydrogenase.